Consider the following 472-residue polypeptide: Cysteine--tRNA ligase (472 aa).

Cys-29 serves as a coordination point for Zn(2+). A 'HIGH' region motif is present at residues 31-41 (ITVYDYCHLGH). Residues Cys-214, His-239, and Glu-243 each contribute to the Zn(2+) site. Positions 271–275 (KMSKS) match the 'KMSKS' region motif. Lys-274 is a binding site for ATP.

The protein belongs to the class-I aminoacyl-tRNA synthetase family. Monomer. It depends on Zn(2+) as a cofactor.

The protein resides in the cytoplasm. The catalysed reaction is tRNA(Cys) + L-cysteine + ATP = L-cysteinyl-tRNA(Cys) + AMP + diphosphate. The polypeptide is Cysteine--tRNA ligase (Picosynechococcus sp. (strain ATCC 27264 / PCC 7002 / PR-6) (Agmenellum quadruplicatum)).